Consider the following 700-residue polypeptide: Calpain-2 catalytic subunit (700 aa).

An N-acetylalanine modification is found at A2. The propeptide at A2–G19 is anchors to the small subunit. Positions L45 to T344 constitute a Calpain catalytic domain. Ca(2+) contacts are provided by I89, G91, and D96. C105 is an active-site residue. Residues E175, Q229, and K230 each contribute to the Ca(2+) site. Catalysis depends on residues H262 and N286. The Ca(2+) site is built by E292, D299, Q319, and E323. A domain III region spans residues P345–D514. Residues E515 to D529 form a linker region. A domain IV region spans residues I530–L700. Residues A542, D545, E547, E552, D585, D587, S589, K591, E596, D615, D617, S619, T621, E626, D658, and N661 each coordinate Ca(2+). EF-hand domains are found at residues F572–Q605 and T602–K637. Positions V667–L700 constitute an EF-hand 3 domain.

This sequence belongs to the peptidase C2 family. As to quaternary structure, forms a heterodimer with a small (regulatory) subunit (CAPNS1). Interacts with CPEB3; this leads to cleavage of CPEB3. The cofactor is Ca(2+). Ubiquitous.

The protein resides in the cytoplasm. It localises to the cell membrane. It catalyses the reaction Broad endopeptidase specificity.. Its activity is regulated as follows. Activated by 200-1000 micromolar concentrations of calcium and inhibited by calpastatin. Functionally, calcium-regulated non-lysosomal thiol-protease which catalyze limited proteolysis of substrates involved in cytoskeletal remodeling and signal transduction. Proteolytically cleaves MYOC at 'Arg-226'. Proteolytically cleaves CPEB3 following neuronal stimulation which abolishes CPEB3 translational repressor activity, leading to translation of CPEB3 target mRNAs. The protein is Calpain-2 catalytic subunit (Capn2) of Rattus norvegicus (Rat).